The chain runs to 257 residues: Capsid protein (257 aa).

The short motif at 3-20 (KRTGDILISTPVSKVRRK) is the Bipartite nuclear localization signal element. Positions 40–54 (KRRSWTYRPMYRKPR) match the Nuclear localization signal motif. A zinc finger spans residues 68–85 (CEGPCKVQSYEQRDDVKH). A Nuclear export signal motif is present at residues 101-122 (ITHRVGKRFCIKSIYILGKIWM). Residues 201 to 248 (KRFFKVNTHVVYNHQEQAKYENHTENALLLYMACTHASNPVYATLKIR) carry the Bipartite nuclear localization signal motif.

The protein belongs to the geminiviridae capsid protein family. Homomultimer. Binds to single-stranded and double-stranded viral DNA. Interacts (via nuclear localization signals) with host importin alpha-1a.

The protein resides in the virion. The protein localises to the host nucleus. In terms of biological role, encapsidates the viral genome into characteristic twinned ('geminate') particles. Binds the genomic viral ssDNA and shuttles it into and out of the cell nucleus. Plays a role in protection of the genome from degradation, virus acquisition and transmission by insect vectors, infectivity, and systemic movement. The CP of monopartite geminiviruses is absolutely essential for virus movement. In Tomato yellow leaf curl Sardinia virus (isolate Spain-1) (TYLCSV), this protein is Capsid protein.